The sequence spans 505 residues: Deoxyguanosinetriphosphate triphosphohydrolase (505 aa).

The HD domain occupies 66 to 273; it reads RLTHSLEVQQ…MEAADDISYC (208 aa).

This sequence belongs to the dGTPase family. Type 1 subfamily. In terms of assembly, homotetramer. Mg(2+) is required as a cofactor.

The enzyme catalyses dGTP + H2O = 2'-deoxyguanosine + triphosphate + H(+). Its function is as follows. dGTPase preferentially hydrolyzes dGTP over the other canonical NTPs. The polypeptide is Deoxyguanosinetriphosphate triphosphohydrolase (Escherichia fergusonii (strain ATCC 35469 / DSM 13698 / CCUG 18766 / IAM 14443 / JCM 21226 / LMG 7866 / NBRC 102419 / NCTC 12128 / CDC 0568-73)).